The sequence spans 762 residues: MAIQTSNLGYPRIGLQREWKKTLEAFWSNKINEEQFLTTMKEIRLQHVKVQQEKGIELIPIGDFTYYDHVLDTAYMLGFIPSRFSEFTSYLDVYFAMARGSKDHVASEMTKWFNTNYHYIVPEYEEGLQISLKDNRPLRLYEEAKQELGVDGKPVILGPYTFLKLAKGYTQEQFATILKQLVAPYVQLLSELHAAGAQIIQVDEPIFASLTKEEVQQAKEIYEAIRKEVPNATLLLQTYFDSVEENYEEIITFPVSSIGLDFVHGKEGNLNAISKYGFPADKTLAVGCIDGRNIWRADLDEVLTLFTTLQKQVQTKDLIVQPSCSLLHTPIDKTEETHLSTELFDALAFANQKLEELVLIHSALTQGTESISNELETYRNVHHTIRSSAARNREDVKAARTALKEEDFSRPLPFEKRYELQQVALKLPLLPTTTIGSFPQTTEVRQTRKEWRNGIISNEQYEQFIEKETEKWIRYQEEIGLDVLVHGEFERTDMVEYFGERLAGFSFTKNGWVQSYGSRCVKPPVIYGDVAFINGMTIKETVYAQSLTEKVVKGMLTGPVTILNWSFVRNDIPRKEVSYQIALALRHEIELLESSGIRVIQVDEPALREGMPLKEKDWDAYITWAVQSFLLATSSVANETQIHTHMCYSNFEDIVDAIRALDADVISIETSRSHGEFIDTLKHTTYEKGIGLGVYDIHSPRVPSKDEMYKIVEQSLQVCDPKYFWINPDCGLKTRRTEEVIPALEHMVQAAKDARSLLKTNA.

Residues 17 to 20 (REWK) and lysine 111 each bind 5-methyltetrahydropteroyltri-L-glutamate. Residues 435–437 (IGS) and glutamate 488 contribute to the L-homocysteine site. L-methionine is bound by residues 435-437 (IGS) and glutamate 488. 5-methyltetrahydropteroyltri-L-glutamate-binding positions include 519–520 (RC) and tryptophan 565. Aspartate 603 contributes to the L-homocysteine binding site. Aspartate 603 lines the L-methionine pocket. Glutamate 609 serves as a coordination point for 5-methyltetrahydropteroyltri-L-glutamate. Zn(2+)-binding residues include histidine 645, cysteine 647, and glutamate 669. Histidine 698 functions as the Proton donor in the catalytic mechanism. Cysteine 730 contacts Zn(2+).

The protein belongs to the vitamin-B12 independent methionine synthase family. It depends on Zn(2+) as a cofactor.

It catalyses the reaction 5-methyltetrahydropteroyltri-L-glutamate + L-homocysteine = tetrahydropteroyltri-L-glutamate + L-methionine. Its pathway is amino-acid biosynthesis; L-methionine biosynthesis via de novo pathway; L-methionine from L-homocysteine (MetE route): step 1/1. Catalyzes the transfer of a methyl group from 5-methyltetrahydrofolate to homocysteine resulting in methionine formation. In Bacillus anthracis (strain A0248), this protein is 5-methyltetrahydropteroyltriglutamate--homocysteine methyltransferase.